A 463-amino-acid polypeptide reads, in one-letter code: Secretogranin-3 (463 aa).

The N-terminal stretch at 1-20 is a signal peptide; sequence MGPKYVFITAIIGVFWHVQG. Disordered regions lie at residues 87–111, 225–267, and 353–398; these read VKRS…DSTK, DDDK…PEED, and EDKN…KGKA. Composition is skewed to basic and acidic residues over residues 102–111 and 229–262; these read GTLDDADSTK and QEGK…RNEL.

Interacts with CHGA. Interacts with secretogranin II/SCG2. Interacts (via C-terminus) with CPE.

It localises to the cytoplasmic vesicle. The protein localises to the secretory vesicle. The protein resides in the secretory vesicle membrane. It is found in the secreted. In terms of biological role, member of the granin protein family that regulates the biogenesis of secretory granules. Acts as a sorting receptor for intragranular proteins including chromogranin A/CHGA. May also play a role in angiogenesis. Promotes endothelial proliferation, migration and tube formation through MEK/ERK signaling pathway. In Xenopus tropicalis (Western clawed frog), this protein is Secretogranin-3 (scg3).